The following is a 422-amino-acid chain: Cell division protein DivIB (422 aa).

Basic and acidic residues-rich tracts occupy residues 1–23 (MVDWDKEAQRFRQRRQEAEKQEE) and 62–75 (EEAKGEDFAKDQEQ). The tract at residues 1-77 (MVDWDKEAQR…DFAKDQEQKH (77 aa)) is disordered. At 1–109 (MVDWDKEAQR…LQLKSVSWSR (109 aa)) the chain is on the cytoplasmic side. Residues 110–130 (LILAAAFLFMIIFSAFWLSPL) form a helical membrane-spanning segment. The region spanning 131 to 202 (NRIATIEVSG…RTVEVNVQEF (72 aa)) is the POTRA domain. The Extracellular segment spans residues 131 to 422 (NRIATIEVSG…TVTQTRSSNS (292 aa)). The segment at 329–422 (NPLNDPFASP…TVTQTRSSNS (94 aa)) is disordered. Over residues 338–379 (PEEKASYQEKVDQAKEKSKEKQAKADKHSSESKLGDKPKPRG) the composition is skewed to basic and acidic residues. Positions 389 to 422 (TSSQRQTSSQSSPRPGTNSSQQSSTVTQTRSSNS) are enriched in low complexity.

Belongs to the FtsQ/DivIB family. DivIB subfamily.

It localises to the cell membrane. Cell division protein that may be involved in stabilizing or promoting the assembly of the division complex. The sequence is that of Cell division protein DivIB from Aerococcus urinae (strain CCUG 59500 / ACS-120-V-Col10a).